Reading from the N-terminus, the 401-residue chain is Chromate transport protein (401 aa).

Helical transmembrane passes span 26–46 (LVMY…ALAG), 67–87 (GLAL…IYLG), 93–113 (IVGA…MVLA), 124–144 (LTWM…IIAI), 172–192 (VITE…VWFW), 214–234 (AASG…GVFF), 237–257 (AGAF…GGVV), 272–294 (VAVA…YLVA), 299–321 (ACVA…APYF), 330–350 (ILAF…GAVI), 356–376 (SIVD…LLKF), and 379–399 (LSEP…YPLL).

This sequence belongs to the chromate ion transporter (CHR) (TC 2.A.51) family.

The protein localises to the cell inner membrane. Functionally, this protein reduces chromate accumulation and is essential for chromate resistance. The protein is Chromate transport protein of Cupriavidus metallidurans (strain ATCC 43123 / DSM 2839 / NBRC 102507 / CH34) (Ralstonia metallidurans).